A 403-amino-acid polypeptide reads, in one-letter code: Large ribosomal subunit protein uL3 (403 aa).

The disordered stretch occupies residues 1-38 (MSHRKFSAPRHGSLGFLPRKRSSRHRGKVKSFPKDDSS). A Phosphoserine modification is found at Ser13. Positions 18–31 (PRKRSSRHRGKVKS) are enriched in basic residues. Lys39 participates in a covalent cross-link: Glycyl lysine isopeptide (Lys-Gly) (interchain with G-Cter in SUMO2). Residue Lys136 is modified to N6-acetyllysine. Glycyl lysine isopeptide (Lys-Gly) (interchain with G-Cter in SUMO2) cross-links involve residues Lys224 and Lys226. His245 is modified (tele-methylhistidine). N6-acetyllysine; alternate occurs at positions 286 and 294. Residue Lys286 forms a Glycyl lysine isopeptide (Lys-Gly) (interchain with G-Cter in SUMO2); alternate linkage. Lys294 participates in a covalent cross-link: Glycyl lysine isopeptide (Lys-Gly) (interchain with G-Cter in SUMO1); alternate. Ser304 is subject to Phosphoserine. Lys366 bears the N6-acetyllysine; alternate mark. Residue Lys366 forms a Glycyl lysine isopeptide (Lys-Gly) (interchain with G-Cter in SUMO2); alternate linkage. Residue Lys373 is modified to N6-acetyllysine. Residues Lys386, Lys393, and Lys399 each participate in a glycyl lysine isopeptide (Lys-Gly) (interchain with G-Cter in SUMO2) cross-link.

The protein belongs to the universal ribosomal protein uL3 family. In terms of assembly, component of the large ribosomal subunit. Interacts with DHX33. In terms of processing, constitutively monomethylated at His-245 by METTL18. Methylation at His-245 regulates translation elongation by slowing ribosome traversal on tyrosine codons: slower elongation provides enough time for proper folding of synthesized proteins and prevents cellular aggregation of tyrosine-rich proteins It is not required for incorporation of RPL3 into ribosomes.

Its subcellular location is the nucleus. It localises to the nucleolus. The protein localises to the cytoplasm. In terms of biological role, component of the large ribosomal subunit. The ribosome is a large ribonucleoprotein complex responsible for the synthesis of proteins in the cell. The sequence is that of Large ribosomal subunit protein uL3 (RPL3) from Sus scrofa (Pig).